We begin with the raw amino-acid sequence, 262 residues long: MEIIPPRLKEPLYALYELRLRQGLTASESRLPRHIAVLCDGNRRWARDAGYDDVSYGYRMGAAKIAEMLRWCQEAGIEMTTVYLLSTENLQRDPDELAALIEIITDVVEEICAPANRWSVRTVGDLELLGEEPACRLRGAVESTPGVAPFHVNVAVGYGGRREIVGAVRALLGKELANGATAEELVEAVTVEGIARNLYTSGQPDPDLVIRTSGEQRLSGFLLWQSAYSEMWFTETHWPAFRRVDFLRALRDYSMRHRRYGK.

Asp-40 is a catalytic residue. Asp-40 is a binding site for Mg(2+). Substrate-binding positions include 41–44 (GNRR), Trp-45, and 86–88 (STE). The Proton acceptor role is filled by Asn-89. Substrate contacts are provided by residues Arg-92, Arg-211, and 217 to 219 (RLS). Glu-230 serves as a coordination point for Mg(2+).

It belongs to the UPP synthase family. Z-FPP synthase subfamily. It depends on Mg(2+) as a cofactor.

It carries out the reaction isopentenyl diphosphate + (2E)-geranyl diphosphate = (2Z,6E)-farnesyl diphosphate + diphosphate. Its pathway is phospholipid metabolism; decaprenyl phosphate biosynthesis. Generates Z-farnesyl diphosphate (Z-FPP) from isopentenyl pyrophosphate (IPP). Z-FPP is the precursor of decaprenyl diphosphate, which has a central role in the biosynthesis of the mycobacterial cell wall. The polypeptide is Short-chain Z-isoprenyl diphosphate synthase (Mycobacterium leprae (strain TN)).